The following is a 579-amino-acid chain: Matrix metalloproteinase-C (579 aa).

An N-terminal signal peptide occupies residues M1–A17. A propeptide spans G18–L129 (activation peptide). Positions N32–S51 are disordered. Over residues S33–P50 the composition is skewed to low complexity. The Cysteine switch signature appears at S120 to A127. Zn(2+) contacts are provided by C122, H200, D202, H215, and H225. N231 carries an N-linked (GlcNAc...) asparagine glycan. Residue H254 coordinates Zn(2+). Residue E255 is part of the active site. The Zn(2+) site is built by H258 and H264. A disordered region spans residues S307–C394. Gly residues predominate over residues D315–S324. Residues R325–F341 show a composition bias toward low complexity. The span at W373–C394 shows a compositional bias: gly residues. Hemopexin repeat units follow at residues P395–A437 and P438–S490.

Belongs to the peptidase M10A family. Requires Zn(2+) as cofactor.

It is found in the secreted. The protein resides in the extracellular space. The protein localises to the extracellular matrix. Its activity is regulated as follows. Inhibited by human TIMP1 and TIMP2 and the broad MMP inhibitors BB94 (Batimastat) and CT543. In terms of biological role, metalloproteinase. This Caenorhabditis elegans protein is Matrix metalloproteinase-C.